The following is a 417-amino-acid chain: Hydrogen cyanide synthase subunit HcnC (417 aa).

Positions 1–18 are cleaved as a signal peptide; the sequence is MNRTYDIVIAGGGVIGAS. 7 to 21 contributes to the FAD binding site; sequence IVIAGGGVIGASCAY. Residue Cys19 is the site of N-palmitoyl cysteine attachment. The S-diacylglycerol cysteine moiety is linked to residue Cys19. Residues 46–66 traverse the membrane as a helical segment; that stretch reads SAGGLWAIGESVGLGCGVIFF.

The protein belongs to the FAD-dependent glycerol-3-phosphate dehydrogenase family. As to quaternary structure, heterotrimer of HcnA, HcnB and HcnC. FAD is required as a cofactor.

Its subcellular location is the cell membrane. It catalyses the reaction glycine + 2 A = hydrogen cyanide + 2 AH2 + CO2. With respect to regulation, oxygen is necessary for cyanogenesis. Activated by succinate, glycine methyl ester, glucose and D,L-methionine in addition to glycine. Phenazine methosulfate, methylene blue, 2,6-dichlorophenolindophenol (DCIP) and ferricyanide can replace oxygen for the reaction. Inhibited by pyrrolnitrin and acriflavine at 1 mM concentration. Functionally, a three-component membrane-bound flavoenzyme that catalyzes the formation of hydrogen cyanide, a secondary metabolite, by transfer of electrons to a cyanide-resistant branch of the aerobic respiratory chain. The chain is Hydrogen cyanide synthase subunit HcnC from Pseudomonas aeruginosa (strain ATCC 15692 / DSM 22644 / CIP 104116 / JCM 14847 / LMG 12228 / 1C / PRS 101 / PAO1).